Consider the following 276-residue polypeptide: MLLRFTKMHGLGNDFMVIDLVTQHAHIQPKHAKQWGDRHTGIGFDQLLIVEPPSRPDVDFRYRIFNADGSEVEQCGNGARCFARFVLDKRLTVKKRIRVETRSGVIELDVRPDGQVCVDMGPPRLEPREIPFQAENAALDYQVEVDGCEVELAALSMGNPHAVLRVENVESAPVHELGPKLEHHPRFPQRVNVGFLQVVDRQHARLRVWERGAGETQACGTGACAAAVAAIRQGWMDSPVLVDLPGGRLSIAWAGPDQSVMMTGPAVRVYEGQVRL.

Residues asparagine 13, glutamine 46, and asparagine 66 each coordinate substrate. The Proton donor role is filled by cysteine 75. Substrate is bound by residues 76–77, asparagine 159, asparagine 192, and 210–211; these read GN and ER. Cysteine 219 serves as the catalytic Proton acceptor. Residue 220 to 221 participates in substrate binding; the sequence is GT.

The protein belongs to the diaminopimelate epimerase family. Homodimer.

It is found in the cytoplasm. It catalyses the reaction (2S,6S)-2,6-diaminopimelate = meso-2,6-diaminopimelate. It participates in amino-acid biosynthesis; L-lysine biosynthesis via DAP pathway; DL-2,6-diaminopimelate from LL-2,6-diaminopimelate: step 1/1. Its function is as follows. Catalyzes the stereoinversion of LL-2,6-diaminopimelate (L,L-DAP) to meso-diaminopimelate (meso-DAP), a precursor of L-lysine and an essential component of the bacterial peptidoglycan. This is Diaminopimelate epimerase from Azotobacter vinelandii (strain DJ / ATCC BAA-1303).